Consider the following 165-residue polypeptide: Crossover junction endodeoxyribonuclease RuvC (165 aa).

Residues aspartate 7, glutamate 67, and aspartate 140 contribute to the active site. Residues aspartate 7, glutamate 67, and aspartate 140 each contribute to the Mg(2+) site.

It belongs to the RuvC family. In terms of assembly, homodimer which binds Holliday junction (HJ) DNA. The HJ becomes 2-fold symmetrical on binding to RuvC with unstacked arms; it has a different conformation from HJ DNA in complex with RuvA. In the full resolvosome a probable DNA-RuvA(4)-RuvB(12)-RuvC(2) complex forms which resolves the HJ. Mg(2+) is required as a cofactor.

It localises to the cytoplasm. It carries out the reaction Endonucleolytic cleavage at a junction such as a reciprocal single-stranded crossover between two homologous DNA duplexes (Holliday junction).. Functionally, the RuvA-RuvB-RuvC complex processes Holliday junction (HJ) DNA during genetic recombination and DNA repair. Endonuclease that resolves HJ intermediates. Cleaves cruciform DNA by making single-stranded nicks across the HJ at symmetrical positions within the homologous arms, yielding a 5'-phosphate and a 3'-hydroxyl group; requires a central core of homology in the junction. The consensus cleavage sequence is 5'-(A/T)TT(C/G)-3'. Cleavage occurs on the 3'-side of the TT dinucleotide at the point of strand exchange. HJ branch migration catalyzed by RuvA-RuvB allows RuvC to scan DNA until it finds its consensus sequence, where it cleaves and resolves the cruciform DNA. The polypeptide is Crossover junction endodeoxyribonuclease RuvC (Thermotoga petrophila (strain ATCC BAA-488 / DSM 13995 / JCM 10881 / RKU-1)).